The sequence spans 239 residues: Trimethylguanosine synthase (239 aa).

This sequence belongs to the methyltransferase superfamily. Trimethylguanosine synthase family. In terms of assembly, monomer. Interacts with mug174; both proteins are required to maintain Cajal body integrity.

The protein localises to the nucleus. It is found in the cajal body. The enzyme catalyses a 5'-end (N(7)-methyl 5'-triphosphoguanosine)-ribonucleoside in snRNA + S-adenosyl-L-methionine = a 5'-end (N(2),N(7)-dimethyl 5'-triphosphoguanosine)-ribonucleoside in snRNA + S-adenosyl-L-homocysteine + H(+). It carries out the reaction a 5'-end (N(7)-methyl 5'-triphosphoguanosine)-ribonucleoside in snoRNA + S-adenosyl-L-methionine = a 5'-end (N(2),N(7)-dimethyl 5'-triphosphoguanosine)-ribonucleoside in snoRNA + S-adenosyl-L-homocysteine + H(+). It catalyses the reaction a 5'-end (N(2),N(7)-dimethyl 5'-triphosphoguanosine)-ribonucleoside in snRNA + S-adenosyl-L-methionine = a 5'-end (N(2),N(2),N(7)-trimethyl 5'-triphosphoguanosine)-ribonucleoside in snRNA + S-adenosyl-L-homocysteine + H(+). The catalysed reaction is a 5'-end (N(2),N(7)-dimethyl 5'-triphosphoguanosine)-ribonucleoside in snoRNA + S-adenosyl-L-methionine = a 5'-end (N(2),N(2),N(7)-trimethyl 5'-triphosphoguanosine)-ribonucleoside in snoRNA + S-adenosyl-L-homocysteine + H(+). With respect to regulation, substrate inhibited by S-adenosyl-L-homocysteine. Functionally, catalyzes the two serial methylation steps for the conversion of the 7-monomethylguanosine (m(7)G) caps of snRNAs and snoRNAs to a 2,2,7-trimethylguanosine (m(2,2,7)G) cap structure. The enzyme is specific for guanine, and N7 methylation must precede N2 methylation. Required for pre-mRNA splicing, pre-rRNA processing and small ribosomal subunit synthesis. Involved in nucleolar structural organization. The protein is Trimethylguanosine synthase (tgs1) of Schizosaccharomyces pombe (strain 972 / ATCC 24843) (Fission yeast).